The following is a 176-amino-acid chain: Peptide deformylase (176 aa).

The Fe cation site is built by C100 and H142. The active site involves E143. Fe cation is bound at residue H146.

This sequence belongs to the polypeptide deformylase family. Fe(2+) serves as cofactor.

The enzyme catalyses N-terminal N-formyl-L-methionyl-[peptide] + H2O = N-terminal L-methionyl-[peptide] + formate. In terms of biological role, removes the formyl group from the N-terminal Met of newly synthesized proteins. Requires at least a dipeptide for an efficient rate of reaction. N-terminal L-methionine is a prerequisite for activity but the enzyme has broad specificity at other positions. The polypeptide is Peptide deformylase (Elusimicrobium minutum (strain Pei191)).